A 431-amino-acid polypeptide reads, in one-letter code: UDP-N-acetylglucosamine 1-carboxyvinyltransferase (431 aa).

Residue 22–23 coordinates phosphoenolpyruvate; the sequence is KN. R102 is a UDP-N-acetyl-alpha-D-glucosamine binding site. The Proton donor role is filled by C126. Residue C126 is modified to 2-(S-cysteinyl)pyruvic acid O-phosphothioketal. UDP-N-acetyl-alpha-D-glucosamine contacts are provided by D318 and I340.

It belongs to the EPSP synthase family. MurA subfamily.

The protein localises to the cytoplasm. It catalyses the reaction phosphoenolpyruvate + UDP-N-acetyl-alpha-D-glucosamine = UDP-N-acetyl-3-O-(1-carboxyvinyl)-alpha-D-glucosamine + phosphate. It participates in cell wall biogenesis; peptidoglycan biosynthesis. In terms of biological role, cell wall formation. Adds enolpyruvyl to UDP-N-acetylglucosamine. In Bartonella quintana (strain Toulouse) (Rochalimaea quintana), this protein is UDP-N-acetylglucosamine 1-carboxyvinyltransferase.